A 102-amino-acid chain; its full sequence is UPF0235 protein msl4154 (102 aa).

Belongs to the UPF0235 family.

The protein is UPF0235 protein msl4154 of Mesorhizobium japonicum (strain LMG 29417 / CECT 9101 / MAFF 303099) (Mesorhizobium loti (strain MAFF 303099)).